The primary structure comprises 241 residues: MRLVIARCCVDYVGRLEAHLPPADRLILLKADGSVSIHADDRAYKPLNWMMPPCSLEAVEASSFDGDDAPTEYSELGNEGVEQLWIVTNPKGEQLRIQIFEIYSDTEHDLGEDPGLVKDGVEAHLQELLAEQIEILGEGYSLIRREYPTAIGPVDILSKDSTGATVAVEIKRRGGIDGVEQLTRYVELLNRDELLAPVTGVFAAQEIKPQARTLAEDRGFRCVTLDYEAMRGTDSSELRLF.

This sequence belongs to the NucS endonuclease family.

The protein localises to the cytoplasm. Its function is as follows. Cleaves both 3' and 5' ssDNA extremities of branched DNA structures. This chain is Endonuclease NucS, found in Corynebacterium jeikeium (strain K411).